We begin with the raw amino-acid sequence, 41 residues long: Inducible serine protease inhibitor 3 (41 aa).

Functionally, inhibits trypsin and the toxin proteases PR1 and PR2 of M.anisopliae. Does not inhibit chymotrypsin, subtilisin Carlsberg, proteinase K and porcine pancreatic elastase. The sequence is that of Inducible serine protease inhibitor 3 from Galleria mellonella (Greater wax moth).